A 239-amino-acid chain; its full sequence is Phosphoribosylaminoimidazole-succinocarboxamide synthase (239 aa).

Belongs to the SAICAR synthetase family.

It catalyses the reaction 5-amino-1-(5-phospho-D-ribosyl)imidazole-4-carboxylate + L-aspartate + ATP = (2S)-2-[5-amino-1-(5-phospho-beta-D-ribosyl)imidazole-4-carboxamido]succinate + ADP + phosphate + 2 H(+). It functions in the pathway purine metabolism; IMP biosynthesis via de novo pathway; 5-amino-1-(5-phospho-D-ribosyl)imidazole-4-carboxamide from 5-amino-1-(5-phospho-D-ribosyl)imidazole-4-carboxylate: step 1/2. The chain is Phosphoribosylaminoimidazole-succinocarboxamide synthase from Psychrobacter sp. (strain PRwf-1).